The chain runs to 785 residues: Toll-like receptor 2 (785 aa).

Residues 1-17 (MSRVLWTLWVLGAVTNL) form the signal peptide. Residues 18 to 589 (SKEEAPDQSS…RLSVSECHRT (572 aa)) lie on the Extracellular side of the membrane. Cys-31 and Cys-37 are oxidised to a cystine. 19 LRR repeats span residues 54-77 (AVRS…RDCV), 78-101 (NLKA…LSLW), 102-125 (SLEH…RPLS), 126-150 (SLKF…SQLT), 151-175 (NLRI…AGLT), 176-199 (FLEE…KSIQ), 200-223 (NISY…DLSS), 224-250 (SLKH…ETHT), 251-278 (LVKK…NYVS), 279-308 (GVLE…KNIG), 309-337 (QIET…SLTE), 338-361 (DVKR…QHLK), 362-388 (SLEY…DAWP), 389-414 (SLQT…LTLK), 415-437 (NLTN…QWPE), 438-457 (KMKY…GCIP), 458-478 (KTLE…LNLP), 479-500 (QLKE…SLLP), and 501-524 (MLLV…DSFH). N-linked (GlcNAc...) asparagine glycosylation is present at Asn-115. N-linked (GlcNAc...) asparagine glycans are attached at residues Asn-200 and Asn-246. Cys-354 and Cys-383 are oxidised to a cystine. 2 N-linked (GlcNAc...) asparagine glycosylation sites follow: Asn-415 and Asn-443. Cys-433 and Cys-455 are disulfide-bonded. The 55-residue stretch at 525 to 579 (TLKTLEAGGNNFICSCEFLSFTQEQQALAKVLIDWPANYLCDSPSHVRGQQVQDV) folds into the LRRCT domain. The chain crosses the membrane as a helical span at residues 590–610 (ALVSGMCCALFLLILLTEVLC). Over 611–785 (HRFHGLWYMR…WLNLRTAIKS (175 aa)) the chain is Cytoplasmic. In terms of domain architecture, TIR spans 640 to 783 (VCYDAFVSYS…GFWLNLRTAI (144 aa)). Residue Lys-755 forms a Glycyl lysine isopeptide (Lys-Gly) (interchain with G-Cter in ubiquitin) linkage. Positions 762–779 (YLEWPTDDAQQEGFWLNL) match the ATG16L1-binding motif motif.

This sequence belongs to the Toll-like receptor family. As to quaternary structure, interacts with LY96, TLR1 and TLR6 (via extracellular domain). TLR2 seems to exist in heterodimers with either TLR1 or TLR6 before stimulation by the ligand. The heterodimers form bigger oligomers in response to their corresponding ligands as well as further heterotypic associations with other receptors such as CD14 and/or CD36. Binds MYD88 (via TIR domain). Interacts with TICAM1. Interacts with CNPY3. Interacts with ATG16L1. Interacts with PPP1R11. Interacts with TICAM2. Interacts with TIRAP. Post-translationally, ubiquitinated at Lys-755 by PPP1R11, leading to its degradation. Deubiquitinated by USP2. Glycosylation of Asn-443 is critical for secretion of the N-terminal ectodomain of TLR2.

The protein localises to the membrane. It is found in the cytoplasmic vesicle. It localises to the phagosome membrane. The protein resides in the membrane raft. Functionally, cooperates with LY96 to mediate the innate immune response to bacterial lipoproteins and other microbial cell wall components. Cooperates with TLR1 or TLR6 to mediate the innate immune response to bacterial lipoproteins or lipopeptides. Acts via MYD88 and TRAF6, leading to NF-kappa-B activation, cytokine secretion and the inflammatory response. May also promote apoptosis in response to lipoproteins. Forms activation clusters composed of several receptors depending on the ligand, these clusters trigger signaling from the cell surface and subsequently are targeted to the Golgi in a lipid-raft dependent pathway. Forms the cluster TLR2:TLR6:CD14:CD36 in response to diacylated lipopeptides and TLR2:TLR1:CD14 in response to triacylated lipopeptides. In Canis lupus familiaris (Dog), this protein is Toll-like receptor 2 (TLR2).